Here is a 344-residue protein sequence, read N- to C-terminus: MMTSVPPRKTWWKSKKTVKVRRSYSTFPSLNAWEKFRGLLPVDGETNPGVGLGVEEGLLCQMVHSPEFNLFPNSVVFESNFVQVRRSRDWKEIYKASNTMALGVTSSVPCLPLPNILLMARVIWHQGQSQTWNRPSTVPSINLKSILPLKFVELQIWDHHERILRLRTVTEKIYFLKLHPDHPETVFRFWIRLVQILHKGLSITTKDPTILVTHCLVPKSLCSPGGKSELVQKNSKGLQPSESLTHLMAQGESEALSQIFSDLHQQKQYSSSRSEKVQINKTSSEKATPCEDSIPCTCDLNWRDAFMFGEWERENPSGPQPHSLLSTLAASSRPRLSLIGGNSI.

The protein belongs to the GARIN family.

Its subcellular location is the golgi apparatus. Its function is as follows. RAB2B effector protein required for accurate acrosome formation and normal male fertility. In complex with RAB2A/RAB2B, seems to suppress excessive vesicle trafficking during acrosome formation. In Rattus norvegicus (Rat), this protein is Golgi-associated RAB2 interactor protein 1B (Garin1b).